Here is a 247-residue protein sequence, read N- to C-terminus: Cell division protein ZapD (247 aa).

It belongs to the ZapD family. In terms of assembly, interacts with FtsZ.

It is found in the cytoplasm. Its function is as follows. Cell division factor that enhances FtsZ-ring assembly. Directly interacts with FtsZ and promotes bundling of FtsZ protofilaments, with a reduction in FtsZ GTPase activity. This Shigella sonnei (strain Ss046) protein is Cell division protein ZapD.